The primary structure comprises 488 residues: ATP synthase subunit beta (488 aa).

ATP is bound at residue 164–171; sequence GGAGVGKT.

The protein belongs to the ATPase alpha/beta chains family. F-type ATPases have 2 components, CF(1) - the catalytic core - and CF(0) - the membrane proton channel. CF(1) has five subunits: alpha(3), beta(3), gamma(1), delta(1), epsilon(1). CF(0) has four main subunits: a(1), b(1), b'(1) and c(9-12).

It is found in the cellular thylakoid membrane. It carries out the reaction ATP + H2O + 4 H(+)(in) = ADP + phosphate + 5 H(+)(out). Its function is as follows. Produces ATP from ADP in the presence of a proton gradient across the membrane. The catalytic sites are hosted primarily by the beta subunits. The polypeptide is ATP synthase subunit beta (Prochlorococcus marinus (strain MIT 9313)).